The following is a 175-amino-acid chain: MLPAYLSNPFAAVFGGGKPIDGGRTYKDGRRILGDGKTYRGLFSGIFCGFLAGCIEIWLSMRGFEIMGIKMPTFGPNYASALIVVLALPSGALFGDMFKSFFKRRMGLKRGASLPLVDQLDFVVGAWFFTYLAAPEWFVSNFTTGIALTVLIMTPLLHLTTNIIGYFIGVKKEPW.

4 helical membrane passes run 41–61 (GLFS…WLSM), 78–98 (YASA…GDMF), 122–142 (FVVG…VSNF), and 150–170 (VLIM…FIGV).

Belongs to the CDP-archaeol synthase family. Mg(2+) is required as a cofactor.

It is found in the cell membrane. It catalyses the reaction 2,3-bis-O-(geranylgeranyl)-sn-glycerol 1-phosphate + CTP + H(+) = CDP-2,3-bis-O-(geranylgeranyl)-sn-glycerol + diphosphate. The protein operates within membrane lipid metabolism; glycerophospholipid metabolism. In terms of biological role, catalyzes the formation of CDP-2,3-bis-(O-geranylgeranyl)-sn-glycerol (CDP-archaeol) from 2,3-bis-(O-geranylgeranyl)-sn-glycerol 1-phosphate (DGGGP) and CTP. This reaction is the third ether-bond-formation step in the biosynthesis of archaeal membrane lipids. This Methanosarcina acetivorans (strain ATCC 35395 / DSM 2834 / JCM 12185 / C2A) protein is CDP-archaeol synthase.